A 464-amino-acid polypeptide reads, in one-letter code: Lysosomal dipeptide transporter MFSD1 (464 aa).

A Dileucine internalization motif motif is present at residues 11–12 (LL). Residue Ser20 is modified to Phosphoserine. 12 helical membrane-spanning segments follow: residues 38–58 (LAHR…SYFC), 82–102 (LLYA…GFLI), 112–132 (TVIF…GGIF), 134–154 (AFWL…SLAV), 190–210 (LMGW…HMTL), 214–234 (LMIG…LAYL), 265–285 (LILV…FIGL), 303–323 (AINS…GLLV), 330–350 (IIWV…LAFT), 360–380 (LLGF…AFIV), 391–411 (FMQS…GMIL), and 417–437 (LLLE…VVCL).

Belongs to the major facilitator superfamily. In terms of assembly, homodimer. Interacts with lysosomal protein GLMP (via lumenal domain); the interaction starts while both proteins are still in the endoplasmic reticulum and is required for stabilization of MFSD1 in lysosomes but has no direct effect on its targeting to lysosomes or transporter activity. In terms of processing, not N-glycosylated. As to expression, in brain, expressed in the cortex, striatum hippocampus, hypothalamus, thalamus and brainstem (at protein level). Widely expressed with highest levels in kidney and spleen (at protein level).

The protein localises to the lysosome membrane. The enzyme catalyses L-alpha-aminoacyl-L-arginine(out) = L-alpha-aminoacyl-L-arginine(in). It carries out the reaction L-arginyl-L-alpha-amino acid(out) = L-arginyl-L-alpha-amino acid(in). The catalysed reaction is L-arginyl-glycine(out) = L-arginyl-glycine(in). It catalyses the reaction L-alpha-aminoacyl-L-lysine(out) = L-alpha-aminoacyl-L-lysine(in). The enzyme catalyses L-aspartyl-L-lysine(out) = L-aspartyl-L-lysine(in). It carries out the reaction L-alanyl-L-lysine(out) = L-alanyl-L-lysine(in). The catalysed reaction is L-lysyl-L-alpha-amino acid(out) = L-lysyl-L-alpha-amino acid(in). It catalyses the reaction L-lysyl-L-alanine(out) = L-lysyl-L-alanine(in). The enzyme catalyses L-lysyl-L-lysine(out) = L-lysyl-L-lysine(in). It carries out the reaction L-lysyl-glycine(out) = L-lysyl-glycine(in). The catalysed reaction is L-alpha-aminoacyl-L-histidine(out) = L-alpha-aminoacyl-L-histidine(in). It catalyses the reaction L-histidyl-L-alpha-amino acid(out) = L-histidyl-L-alpha-amino acid(in). The enzyme catalyses L-histidyl-glycine(out) = L-histidyl-glycine(in). Its function is as follows. Lysosomal dipeptide uniporter that selectively exports lysine, arginine or histidine-containing dipeptides with a net positive charge from the lysosome lumen into the cytosol. Could play a role in a specific type of protein O-glycosylation indirectly regulating macrophages migration and tissue invasion. Also essential for liver homeostasis. This chain is Lysosomal dipeptide transporter MFSD1, found in Mus musculus (Mouse).